A 455-amino-acid chain; its full sequence is tRNA modification GTPase MnmE (455 aa).

Positions 25, 85, and 124 each coordinate (6S)-5-formyl-5,6,7,8-tetrahydrofolate. The region spanning 221–375 (GLSTAIIGRP…IEERINKLFF (155 aa)) is the TrmE-type G domain. N231 is a K(+) binding site. Residues 231 to 236 (NVGKSS), 250 to 256 (TDIEGTT), and 275 to 278 (DTAG) each bind GTP. S235 is a Mg(2+) binding site. T250, I252, and T255 together coordinate K(+). T256 is a binding site for Mg(2+). Position 455 (K455) interacts with (6S)-5-formyl-5,6,7,8-tetrahydrofolate.

This sequence belongs to the TRAFAC class TrmE-Era-EngA-EngB-Septin-like GTPase superfamily. TrmE GTPase family. Homodimer. Heterotetramer of two MnmE and two MnmG subunits. It depends on K(+) as a cofactor.

It is found in the cytoplasm. Exhibits a very high intrinsic GTPase hydrolysis rate. Involved in the addition of a carboxymethylaminomethyl (cmnm) group at the wobble position (U34) of certain tRNAs, forming tRNA-cmnm(5)s(2)U34. The polypeptide is tRNA modification GTPase MnmE (Streptococcus mutans serotype c (strain ATCC 700610 / UA159)).